A 197-amino-acid polypeptide reads, in one-letter code: Holliday junction branch migration complex subunit RuvA (197 aa).

A domain I region spans residues 1–63; that stretch reads MFEYLNGKLV…EDAHSLYGFV (63 aa). The segment at 64–142 is domain II; it reads NESEKALFLR…ATGAVGISLL (79 aa). Residues 142–146 are flexible linker; the sequence is LDAAP. The tract at residues 147-197 is domain III; the sequence is AGNLALEEAIEALQALGYKATELKKIEKKLEQEAGLTSEEYIKSALKLMMK.

It belongs to the RuvA family. Homotetramer. Forms an RuvA(8)-RuvB(12)-Holliday junction (HJ) complex. HJ DNA is sandwiched between 2 RuvA tetramers; dsDNA enters through RuvA and exits via RuvB. An RuvB hexamer assembles on each DNA strand where it exits the tetramer. Each RuvB hexamer is contacted by two RuvA subunits (via domain III) on 2 adjacent RuvB subunits; this complex drives branch migration. In the full resolvosome a probable DNA-RuvA(4)-RuvB(12)-RuvC(2) complex forms which resolves the HJ.

It is found in the cytoplasm. The RuvA-RuvB-RuvC complex processes Holliday junction (HJ) DNA during genetic recombination and DNA repair, while the RuvA-RuvB complex plays an important role in the rescue of blocked DNA replication forks via replication fork reversal (RFR). RuvA specifically binds to HJ cruciform DNA, conferring on it an open structure. The RuvB hexamer acts as an ATP-dependent pump, pulling dsDNA into and through the RuvAB complex. HJ branch migration allows RuvC to scan DNA until it finds its consensus sequence, where it cleaves and resolves the cruciform DNA. This is Holliday junction branch migration complex subunit RuvA from Lactococcus lactis subsp. cremoris (strain SK11).